The chain runs to 160 residues: Nucleotide-binding protein VS_1405 (160 aa).

It belongs to the YajQ family.

Functionally, nucleotide-binding protein. This is Nucleotide-binding protein VS_1405 from Vibrio atlanticus (strain LGP32) (Vibrio splendidus (strain Mel32)).